Here is a 212-residue protein sequence, read N- to C-terminus: Probable GTP-binding protein EngB (212 aa).

The EngB-type G domain occupies 38 to 210; the sequence is SLPEIAFVGK…KASLAKCIKP (173 aa). GTP contacts are provided by residues 46-53, 73-77, 91-94, 158-161, and 189-191; these read GKSNVGKS, GRTRQ, DLPG, TKSD, and VSN. The Mg(2+) site is built by Ser53 and Thr75.

This sequence belongs to the TRAFAC class TrmE-Era-EngA-EngB-Septin-like GTPase superfamily. EngB GTPase family. Requires Mg(2+) as cofactor.

Functionally, necessary for normal cell division and for the maintenance of normal septation. In Rickettsia africae (strain ESF-5), this protein is Probable GTP-binding protein EngB.